Reading from the N-terminus, the 459-residue chain is UDP-N-acetylmuramate--L-alanine ligase (459 aa).

118-124 contacts ATP; that stretch reads GTHGKTT.

This sequence belongs to the MurCDEF family.

It localises to the cytoplasm. It carries out the reaction UDP-N-acetyl-alpha-D-muramate + L-alanine + ATP = UDP-N-acetyl-alpha-D-muramoyl-L-alanine + ADP + phosphate + H(+). The protein operates within cell wall biogenesis; peptidoglycan biosynthesis. Cell wall formation. The polypeptide is UDP-N-acetylmuramate--L-alanine ligase (Agathobacter rectalis (strain ATCC 33656 / DSM 3377 / JCM 17463 / KCTC 5835 / VPI 0990) (Eubacterium rectale)).